Here is a 444-residue protein sequence, read N- to C-terminus: Jacalin-related lectin 42 (444 aa).

At Ala2 the chain carries N-acetylalanine. 3 consecutive Jacalin-type lectin domains span residues 2–143, 146–289, and 297–441; these read ALMV…YYIR, ATKS…YYAP, and TEKL…HVIP.

The protein belongs to the jacalin lectin family.

In Arabidopsis thaliana (Mouse-ear cress), this protein is Jacalin-related lectin 42 (JAL42).